The following is a 335-amino-acid chain: uncharacterized protein (335 aa).

This is an uncharacterized protein from Acanthamoeba polyphaga mimivirus (APMV).